The chain runs to 659 residues: Acetyl-coenzyme A synthetase (659 aa).

Residues 206-209 and Thr324 contribute to the CoA site; that span reads RRGK. Residues 400 to 402, 424 to 429, Asp516, Arg531, and Arg542 contribute to the ATP site; these read GEP and DTWWQT. Mg(2+) is bound by residues Val553 and His555. Arg600 serves as a coordination point for CoA.

This sequence belongs to the ATP-dependent AMP-binding enzyme family. Mg(2+) is required as a cofactor.

It catalyses the reaction acetate + ATP + CoA = acetyl-CoA + AMP + diphosphate. Its function is as follows. Catalyzes the conversion of acetate into acetyl-CoA (AcCoA), an essential intermediate at the junction of anabolic and catabolic pathways. AcsA undergoes a two-step reaction. In the first half reaction, AcsA combines acetate with ATP to form acetyl-adenylate (AcAMP) intermediate. In the second half reaction, it can then transfer the acetyl group from AcAMP to the sulfhydryl group of CoA, forming the product AcCoA. This chain is Acetyl-coenzyme A synthetase (acsA), found in Methanothrix thermoacetophila (strain DSM 6194 / JCM 14653 / NBRC 101360 / PT) (Methanosaeta thermophila).